The chain runs to 343 residues: Methionine import ATP-binding protein MetN (343 aa).

In terms of domain architecture, ABC transporter spans 2–241 (IKLSNITKVF…PKTPLAQKFI (240 aa)). 38-45 (GASGAGKS) serves as a coordination point for ATP.

It belongs to the ABC transporter superfamily. Methionine importer (TC 3.A.1.24) family. The complex is composed of two ATP-binding proteins (MetN), two transmembrane proteins (MetI) and a solute-binding protein (MetQ).

Its subcellular location is the cell inner membrane. The enzyme catalyses L-methionine(out) + ATP + H2O = L-methionine(in) + ADP + phosphate + H(+). It catalyses the reaction D-methionine(out) + ATP + H2O = D-methionine(in) + ADP + phosphate + H(+). Functionally, part of the ABC transporter complex MetNIQ involved in methionine import. Responsible for energy coupling to the transport system. This is Methionine import ATP-binding protein MetN from Shigella flexneri serotype 5b (strain 8401).